Here is a 235-residue protein sequence, read N- to C-terminus: Glutathione S-transferase L3 (235 aa).

Positions 27–108 (GTTRLYTSYV…YLDNTFEGPS (82 aa)) constitute a GST N-terminal domain. Glutathione is bound by residues 37–38 (CP), 65–66 (NR), 79–80 (KV), and 92–93 (ES). In terms of domain architecture, GST C-terminal spans 86–230 (NGKIIGESLD…MDPKEIVEVF (145 aa)).

It belongs to the GST superfamily. Lambda family.

It is found in the cytoplasm. The protein localises to the cytosol. It carries out the reaction RX + glutathione = an S-substituted glutathione + a halide anion + H(+). In terms of biological role, catalyzes the glutathione-dependent reduction of S-glutathionylquercetin to quercetin. In Arabidopsis thaliana (Mouse-ear cress), this protein is Glutathione S-transferase L3 (GSTL3).